Here is a 207-residue protein sequence, read N- to C-terminus: Transcription factor DYT1 (207 aa).

Residues 1–38 form a disordered region; that stretch reads MGGGSRFQEPVRMSRRKQVTKEKEEDENFKSPNLEAER. The region spanning 28-77 is the bHLH domain; that stretch reads NFKSPNLEAERRRREKLHCRLMALRSHVPIVTNMTKASIVEDAITYIGEL.

Homodimer. As to expression, mostly expressed in anthers, and, to a lower extent, in young inflorescences undergoing meiosis and siliques.

It localises to the nucleus. Its function is as follows. Transcription factor. Involved in the control of tapetum development. Required for male fertility and pollen differentiation, especially during callose deposition. This is Transcription factor DYT1 from Arabidopsis thaliana (Mouse-ear cress).